A 481-amino-acid polypeptide reads, in one-letter code: Glutamyl-tRNA(Gln) amidotransferase subunit A (481 aa).

Catalysis depends on charge relay system residues K78 and S153. S177 functions as the Acyl-ester intermediate in the catalytic mechanism.

Belongs to the amidase family. GatA subfamily. As to quaternary structure, heterotrimer of A, B and C subunits.

The enzyme catalyses L-glutamyl-tRNA(Gln) + L-glutamine + ATP + H2O = L-glutaminyl-tRNA(Gln) + L-glutamate + ADP + phosphate + H(+). Allows the formation of correctly charged Gln-tRNA(Gln) through the transamidation of misacylated Glu-tRNA(Gln) in organisms which lack glutaminyl-tRNA synthetase. The reaction takes place in the presence of glutamine and ATP through an activated gamma-phospho-Glu-tRNA(Gln). The sequence is that of Glutamyl-tRNA(Gln) amidotransferase subunit A (gatA) from Borreliella burgdorferi (strain ATCC 35210 / DSM 4680 / CIP 102532 / B31) (Borrelia burgdorferi).